Reading from the N-terminus, the 208-residue chain is Uracil phosphoribosyltransferase (208 aa).

Residues Arg-78, Arg-103, and 130–138 contribute to the 5-phospho-alpha-D-ribose 1-diphosphate site; that span reads DPMLATGGS. Uracil is bound by residues Ile-193 and 198 to 200; that span reads GDA. 5-phospho-alpha-D-ribose 1-diphosphate is bound at residue Asp-199.

Belongs to the UPRTase family. The cofactor is Mg(2+).

The catalysed reaction is UMP + diphosphate = 5-phospho-alpha-D-ribose 1-diphosphate + uracil. The protein operates within pyrimidine metabolism; UMP biosynthesis via salvage pathway; UMP from uracil: step 1/1. With respect to regulation, allosterically activated by GTP. In terms of biological role, catalyzes the conversion of uracil and 5-phospho-alpha-D-ribose 1-diphosphate (PRPP) to UMP and diphosphate. This chain is Uracil phosphoribosyltransferase, found in Citrobacter koseri (strain ATCC BAA-895 / CDC 4225-83 / SGSC4696).